We begin with the raw amino-acid sequence, 414 residues long: Serine hydroxymethyltransferase (414 aa).

(6S)-5,6,7,8-tetrahydrofolate-binding positions include Leu-116 and 120–122 (GHL). Position 224 is an N6-(pyridoxal phosphate)lysine (Lys-224). 348-350 (SPF) contributes to the (6S)-5,6,7,8-tetrahydrofolate binding site.

This sequence belongs to the SHMT family. In terms of assembly, homodimer. Pyridoxal 5'-phosphate is required as a cofactor.

It is found in the cytoplasm. The catalysed reaction is (6R)-5,10-methylene-5,6,7,8-tetrahydrofolate + glycine + H2O = (6S)-5,6,7,8-tetrahydrofolate + L-serine. It functions in the pathway one-carbon metabolism; tetrahydrofolate interconversion. Its pathway is amino-acid biosynthesis; glycine biosynthesis; glycine from L-serine: step 1/1. Its function is as follows. Catalyzes the reversible interconversion of serine and glycine with tetrahydrofolate (THF) serving as the one-carbon carrier. This reaction serves as the major source of one-carbon groups required for the biosynthesis of purines, thymidylate, methionine, and other important biomolecules. Also exhibits THF-independent aldolase activity toward beta-hydroxyamino acids, producing glycine and aldehydes, via a retro-aldol mechanism. This chain is Serine hydroxymethyltransferase, found in Campylobacter jejuni subsp. doylei (strain ATCC BAA-1458 / RM4099 / 269.97).